Here is a 478-residue protein sequence, read N- to C-terminus: Isoeugenol monooxygenase (478 aa).

Residues His-167, His-218, His-282, and His-471 each coordinate Fe cation.

This sequence belongs to the carotenoid oxygenase family. As to quaternary structure, monomer. Requires Fe(2+) as cofactor.

The catalysed reaction is (E)-isoeugenol + O2 = vanillin + acetaldehyde. Its activity is regulated as follows. Inhibited by HgCl(2), AgNO(3), CuCl(2), phenylhydrazine, 8-hydroxyquinoline, R-cycloserine and p-chloromercuribenzoic acid. Its function is as follows. Involved in isoeugenol degradation. Catalyzes the oxidative cleavage of the side chain double-bond of isoeugenol to form vanillin and acetaldehyde. The polypeptide is Isoeugenol monooxygenase (Pseudomonas putida (Arthrobacter siderocapsulatus)).